The chain runs to 106 residues: Small ribosomal subunit protein uS10 (106 aa).

Belongs to the universal ribosomal protein uS10 family. Part of the 30S ribosomal subunit.

Functionally, involved in the binding of tRNA to the ribosomes. The sequence is that of Small ribosomal subunit protein uS10 from Pyrobaculum arsenaticum (strain DSM 13514 / JCM 11321 / PZ6).